The chain runs to 163 residues: Small ribosomal subunit protein bS18c (163 aa).

Disordered regions lie at residues 1-52 (MYIS…IGPG) and 144-163 (NLRN…SSDC). The segment covering 7-48 (PFRKSKQPFRKSKQPFHKSKQPFRKFKQPFRKSKQPFRRRSR) has biased composition (basic residues).

It belongs to the bacterial ribosomal protein bS18 family. In terms of assembly, part of the 30S ribosomal subunit.

Its subcellular location is the plastid. It is found in the chloroplast. The polypeptide is Small ribosomal subunit protein bS18c (Saccharum hybrid (Sugarcane)).